A 357-amino-acid polypeptide reads, in one-letter code: Serpentine receptor class epsilon-31 (357 aa).

Helical transmembrane passes span 28 to 48 (VISI…NLSI), 61 to 81 (LMFL…GKFI), 121 to 141 (LLIF…FGIL), 165 to 185 (IPIF…FIVI), 192 to 212 (IIAR…WLFV), 253 to 273 (LVAV…SLTF), and 283 to 303 (FVEN…MFSI).

It belongs to the nematode receptor-like protein sre family.

It is found in the membrane. This is Serpentine receptor class epsilon-31 (sre-31) from Caenorhabditis elegans.